The following is a 311-amino-acid chain: Probable deoxyhypusine synthase (311 aa).

Catalysis depends on Lys-284, which acts as the Nucleophile.

This sequence belongs to the deoxyhypusine synthase family. Requires NAD(+) as cofactor.

The enzyme catalyses [eIF5A protein]-L-lysine + spermidine = [eIF5A protein]-deoxyhypusine + propane-1,3-diamine. The protein operates within protein modification; eIF5A hypusination. In terms of biological role, catalyzes the NAD-dependent oxidative cleavage of spermidine and the subsequent transfer of the butylamine moiety of spermidine to the epsilon-amino group of a specific lysine residue of the eIF-5A precursor protein to form the intermediate deoxyhypusine residue. The sequence is that of Probable deoxyhypusine synthase from Sulfolobus acidocaldarius (strain ATCC 33909 / DSM 639 / JCM 8929 / NBRC 15157 / NCIMB 11770).